Here is a 139-residue protein sequence, read N- to C-terminus: Ribulose bisphosphate carboxylase small subunit, plasmid (139 aa).

Belongs to the RuBisCO small chain family. In terms of assembly, heterohexadecamer of 8 large and 8 small subunits.

In terms of biological role, ruBisCO catalyzes two reactions: the carboxylation of D-ribulose 1,5-bisphosphate, the primary event in carbon dioxide fixation, as well as the oxidative fragmentation of the pentose substrate. Both reactions occur simultaneously and in competition at the same active site. Although the small subunit is not catalytic it is essential for maximal activity. The protein is Ribulose bisphosphate carboxylase small subunit, plasmid of Cupriavidus necator (strain ATCC 17699 / DSM 428 / KCTC 22496 / NCIMB 10442 / H16 / Stanier 337) (Ralstonia eutropha).